Here is an 88-residue protein sequence, read N- to C-terminus: Large ribosomal subunit protein bL31B (88 aa).

It belongs to the bacterial ribosomal protein bL31 family. Type B subfamily. Part of the 50S ribosomal subunit.

In Leuconostoc citreum (strain KM20), this protein is Large ribosomal subunit protein bL31B.